A 159-amino-acid chain; its full sequence is NADH-quinone oxidoreductase subunit B (159 aa).

Cys37, Cys38, Cys102, and Cys132 together coordinate [4Fe-4S] cluster.

This sequence belongs to the complex I 20 kDa subunit family. In terms of assembly, NDH-1 is composed of 14 different subunits. Subunits NuoB, C, D, E, F, and G constitute the peripheral sector of the complex. It depends on [4Fe-4S] cluster as a cofactor.

It is found in the cell inner membrane. It carries out the reaction a quinone + NADH + 5 H(+)(in) = a quinol + NAD(+) + 4 H(+)(out). Its function is as follows. NDH-1 shuttles electrons from NADH, via FMN and iron-sulfur (Fe-S) centers, to quinones in the respiratory chain. Couples the redox reaction to proton translocation (for every two electrons transferred, four hydrogen ions are translocated across the cytoplasmic membrane), and thus conserves the redox energy in a proton gradient. The sequence is that of NADH-quinone oxidoreductase subunit B from Vesicomyosocius okutanii subsp. Calyptogena okutanii (strain HA).